A 259-amino-acid polypeptide reads, in one-letter code: Ribosomal RNA small subunit methyltransferase A (259 aa).

Positions 13, 15, 40, 61, 85, and 103 each coordinate S-adenosyl-L-methionine.

It belongs to the class I-like SAM-binding methyltransferase superfamily. rRNA adenine N(6)-methyltransferase family. RsmA subfamily.

It localises to the cytoplasm. The enzyme catalyses adenosine(1518)/adenosine(1519) in 16S rRNA + 4 S-adenosyl-L-methionine = N(6)-dimethyladenosine(1518)/N(6)-dimethyladenosine(1519) in 16S rRNA + 4 S-adenosyl-L-homocysteine + 4 H(+). In terms of biological role, specifically dimethylates two adjacent adenosines (A1518 and A1519) in the loop of a conserved hairpin near the 3'-end of 16S rRNA in the 30S particle. May play a critical role in biogenesis of 30S subunits. In Neisseria meningitidis serogroup B (strain ATCC BAA-335 / MC58), this protein is Ribosomal RNA small subunit methyltransferase A.